Reading from the N-terminus, the 119-residue chain is Small ribosomal subunit protein uS13 (119 aa).

The tract at residues 90-119 (IRHRRGLPLRGQRTRSNARTRKGKRKPIRS) is disordered. The span at 91–119 (RHRRGLPLRGQRTRSNARTRKGKRKPIRS) shows a compositional bias: basic residues.

It belongs to the universal ribosomal protein uS13 family. As to quaternary structure, part of the 30S ribosomal subunit. Forms a loose heterodimer with protein S19. Forms two bridges to the 50S subunit in the 70S ribosome.

Located at the top of the head of the 30S subunit, it contacts several helices of the 16S rRNA. In the 70S ribosome it contacts the 23S rRNA (bridge B1a) and protein L5 of the 50S subunit (bridge B1b), connecting the 2 subunits; these bridges are implicated in subunit movement. Contacts the tRNAs in the A and P-sites. This is Small ribosomal subunit protein uS13 from Coxiella burnetii (strain CbuK_Q154) (Coxiella burnetii (strain Q154)).